Here is a 146-residue protein sequence, read N- to C-terminus: Transcription antitermination protein NusB (146 aa).

Belongs to the NusB family.

Functionally, involved in transcription antitermination. Required for transcription of ribosomal RNA (rRNA) genes. Binds specifically to the boxA antiterminator sequence of the ribosomal RNA (rrn) operons. The chain is Transcription antitermination protein NusB from Herpetosiphon aurantiacus (strain ATCC 23779 / DSM 785 / 114-95).